The chain runs to 860 residues: Leucine--tRNA ligase (860 aa).

Residues 42–52 (PYPSGRLHMGH) carry the 'HIGH' region motif. A 'KMSKS' region motif is present at residues 619-623 (KMSKS). K622 is a binding site for ATP.

It belongs to the class-I aminoacyl-tRNA synthetase family.

Its subcellular location is the cytoplasm. It catalyses the reaction tRNA(Leu) + L-leucine + ATP = L-leucyl-tRNA(Leu) + AMP + diphosphate. This is Leucine--tRNA ligase from Escherichia coli O157:H7.